We begin with the raw amino-acid sequence, 239 residues long: Phosphoribosylaminoimidazole-succinocarboxamide synthase (239 aa).

This sequence belongs to the SAICAR synthetase family.

It carries out the reaction 5-amino-1-(5-phospho-D-ribosyl)imidazole-4-carboxylate + L-aspartate + ATP = (2S)-2-[5-amino-1-(5-phospho-beta-D-ribosyl)imidazole-4-carboxamido]succinate + ADP + phosphate + 2 H(+). The protein operates within purine metabolism; IMP biosynthesis via de novo pathway; 5-amino-1-(5-phospho-D-ribosyl)imidazole-4-carboxamide from 5-amino-1-(5-phospho-D-ribosyl)imidazole-4-carboxylate: step 1/2. The protein is Phosphoribosylaminoimidazole-succinocarboxamide synthase of Shouchella clausii (strain KSM-K16) (Alkalihalobacillus clausii).